A 234-amino-acid chain; its full sequence is Putative N-acetylmannosamine-6-phosphate 2-epimerase (234 aa).

The protein belongs to the NanE family.

It catalyses the reaction an N-acyl-D-glucosamine 6-phosphate = an N-acyl-D-mannosamine 6-phosphate. It participates in amino-sugar metabolism; N-acetylneuraminate degradation; D-fructose 6-phosphate from N-acetylneuraminate: step 3/5. Its function is as follows. Converts N-acetylmannosamine-6-phosphate (ManNAc-6-P) to N-acetylglucosamine-6-phosphate (GlcNAc-6-P). This Klebsiella pneumoniae subsp. pneumoniae (strain ATCC 700721 / MGH 78578) protein is Putative N-acetylmannosamine-6-phosphate 2-epimerase.